The sequence spans 616 residues: Dihydroxy-acid dehydratase (616 aa).

Residue D81 participates in Mg(2+) binding. Residue C122 coordinates [2Fe-2S] cluster. D123 and K124 together coordinate Mg(2+). At K124 the chain carries N6-carboxylysine. C195 is a binding site for [2Fe-2S] cluster. E491 contributes to the Mg(2+) binding site. The Proton acceptor role is filled by S517.

Belongs to the IlvD/Edd family. Homodimer. It depends on [2Fe-2S] cluster as a cofactor. Mg(2+) serves as cofactor.

It carries out the reaction (2R)-2,3-dihydroxy-3-methylbutanoate = 3-methyl-2-oxobutanoate + H2O. It catalyses the reaction (2R,3R)-2,3-dihydroxy-3-methylpentanoate = (S)-3-methyl-2-oxopentanoate + H2O. The protein operates within amino-acid biosynthesis; L-isoleucine biosynthesis; L-isoleucine from 2-oxobutanoate: step 3/4. It functions in the pathway amino-acid biosynthesis; L-valine biosynthesis; L-valine from pyruvate: step 3/4. Functionally, functions in the biosynthesis of branched-chain amino acids. Catalyzes the dehydration of (2R,3R)-2,3-dihydroxy-3-methylpentanoate (2,3-dihydroxy-3-methylvalerate) into 2-oxo-3-methylpentanoate (2-oxo-3-methylvalerate) and of (2R)-2,3-dihydroxy-3-methylbutanoate (2,3-dihydroxyisovalerate) into 2-oxo-3-methylbutanoate (2-oxoisovalerate), the penultimate precursor to L-isoleucine and L-valine, respectively. The polypeptide is Dihydroxy-acid dehydratase (Salmonella schwarzengrund (strain CVM19633)).